Reading from the N-terminus, the 1350-residue chain is Ubiquitin carboxyl-terminal hydrolase 47 (1350 aa).

Residues 111–138 are disordered; that stretch reads DGEQPQLTSDESGTADSSGLDDSSQEKF. Polar residues predominate over residues 115–132; the sequence is PQLTSDESGTADSSGLDD. A USP domain is found at 173–548; the sequence is VGLVNQAMTC…NAYMLMYRLK (376 aa). Residue Cys182 is the Nucleophile of the active site. Residues 409 to 437 form a disordered region; it reads EDEKSPQTDSCTDSGAENEGSCHSDQMSN. Residues 415–437 are compositionally biased toward polar residues; it reads QTDSCTDSGAENEGSCHSDQMSN. The active-site Proton acceptor is His487. Disordered regions lie at residues 815–836 and 859–1000; these read HPRP…PQED and SLQQ…ESGK. Positions 859–877 are enriched in polar residues; it reads SLQQHQDGGNGDSSKSTEG. Over residues 916-926 the composition is skewed to basic and acidic residues; the sequence is PEERSDSDVNN. Residues 929–945 show a composition bias toward low complexity; that stretch reads STSSVDSDILSSSHSSD. A compositionally biased stretch (basic and acidic residues) spans 973–982; the sequence is KANDGKKETW. A compositionally biased stretch (acidic residues) spans 983–996; that stretch reads DTAEEDSGTDSEYD.

Belongs to the peptidase C19 family. USP47 subfamily.

The protein resides in the cytoplasm. The catalysed reaction is Thiol-dependent hydrolysis of ester, thioester, amide, peptide and isopeptide bonds formed by the C-terminal Gly of ubiquitin (a 76-residue protein attached to proteins as an intracellular targeting signal).. Its function is as follows. Ubiquitin-specific protease that specifically deubiquitinates monoubiquitinated DNA polymerase beta (polb), stabilizing polb thereby playing a role in base-excision repair (BER). The polypeptide is Ubiquitin carboxyl-terminal hydrolase 47 (usp47) (Xenopus laevis (African clawed frog)).